A 557-amino-acid chain; its full sequence is Formate--tetrahydrofolate ligase (557 aa).

66–73 contributes to the ATP binding site; the sequence is TPAGEGKS.

Belongs to the formate--tetrahydrofolate ligase family.

It catalyses the reaction (6S)-5,6,7,8-tetrahydrofolate + formate + ATP = (6R)-10-formyltetrahydrofolate + ADP + phosphate. It functions in the pathway one-carbon metabolism; tetrahydrofolate interconversion. The chain is Formate--tetrahydrofolate ligase from Clostridium botulinum (strain Loch Maree / Type A3).